The chain runs to 150 residues: Transcriptional repressor NrdR (150 aa).

Residues 3-34 (CPFCNFEESKVVDSRATDDNTTIRRRRECLNC) fold into a zinc finger. One can recognise an ATP-cone domain in the interval 49–139 (VLVVKKDLTR…VYRQFKDINT (91 aa)).

It belongs to the NrdR family. Zn(2+) serves as cofactor.

Functionally, negatively regulates transcription of bacterial ribonucleotide reductase nrd genes and operons by binding to NrdR-boxes. This Clostridium botulinum (strain Alaska E43 / Type E3) protein is Transcriptional repressor NrdR.